Consider the following 1507-residue polypeptide: MYNPPPGGGGGNNGGDQSQQQPTNNATLFLLQMIQQSQHQQQHQNQQQQQLELQIRDQERILIEQQRMQHQQQQNQLLQGLNQFPFNPLGLFQVQAAVQAAQAQFAQNAQGSPIPFHIGSPLQPSHSPAASALQQQYLLPSHSPAITPFARNSEAARNIEQFIAQEEAANVPRANSQQQSPLIRPIPQQQALNIQNLTSTQQAQQILAHHRQVPVQQVQHQQHIPTPPLALPIAQQGPISNEVPSVPPVVPATSAGCPQREPRQQQGGRRQNRPGRRKKPEGPPRVDEALAYLRVIKSTFSSDVPVYHRFLEIMKDFRAQRIETPDVIEQVAELLYDSPELVLGFNTFLPTGYRITLTPDRKYVFSSPQMQPRVLLSPDERRARAIEAGAQAVGAIELGSQEGISKDEDRTIEDEDMDKSKEKDDVDGIDDEDDEESGIEDKNNEEMMEEDNHLIEEIICDDRKKDDCEDSQQEIEMSSELAAHTLNIIELLKKSFLARPTKLVDFMTFIDFFMSDQQYKKDMEKLRKDDEDDEIEENEKIEVDDVPGPSNAPQEIKKPDDIEKKDSSKNLQIEESCSDYLVSMLANCCIGEPDLLAATIDFLPYLGKLLVNGSDAIALKIKTILHFSATNDRNDIPPVNRVNPSDVDMDLVKQMEKCKMGTKKNEKLKLKVAGQGDEGATVELMILKKSYRILYERLKSRTTPNQLSHLMVLINAYANLDITREQLISELPKIMGTSGSDLEMIILQLLGAEKEPKNRPENDMDAVMRKDLPAIQPKRGLRDQKMLQQVKNVEAATVCTLGPSYRFMKDTKATDCSGRVELDDDLKGVLNDTWTSIPSWSSEDTGSQAIKKSNLEEFHFKTEDERYELDIIVDSNRTVIEQLSKTLRDYEAMSDEDKKSFKLDKWLNASSRSTTIRVLAKVFTNSAQDFIDAAQKNPLVGLRRILESLKEKDLLWSRFQQDTNRTWRDALDKQMSAATTILNNQHKNYDQKAFKSKPLVNQIEQICEERRKNNSTDTSPHLILEYTPERKVYRDVNDVTGHFFHDLSGTKCDRDRTKIVLFSYRILMEWLCQEGQQVQIDLDNGEIFKFQGDLNEDENLMTLLNMDGRRICGDRVVPVSTSLESNESSIDHFSENLHQKRTRRTFYGDDSVYMIIRYHHMIQERFAKILSTQAIYAQEHFDNQKKNKRWEDGIGADMHGRKALQENIKQRRAAVNDIRNVRSCPSSSYETTLRELKQLGNAQMDIVAFEEAVKNLFPGDIVLFNNIDKLFSSLAKNIHHATCAEERENPIKLYLKYRQRIMNAERDEDMESVIQEYGQTAEEVLRGKNTYRFEFVEEQNKPFIKIWVIPREEKDDDDDDDEEGNEGGKDEDNVKDEDDGGDGEGRDGPDDDQPPPSNDDGDDEEDEDDEEDGPSGADEPESTSGSGNVPMDHLNIGENFLWSPPEEKVCTGKMTTNEKEQRNSVDYMKVTTTPRLRIHKRMLKEHKGCNVELMTGFQQLSAIVPLM.

5 disordered regions span residues 1–26 (MYNP…TNNA), 228–286 (PLAL…PPRV), 397–450 (ELGS…MMEE), 543–569 (VDDV…DSSK), and 1349–1434 (IPRE…MDHL). Positions 16-26 (DQSQQQPTNNA) are enriched in polar residues. The segment covering 270–279 (RQNRPGRRKK) has biased composition (basic residues). Residues 282–352 (GPPRVDEALA…LGFNTFLPTG (71 aa)) enclose the PAH domain. The span at 427–438 (DGIDDEDDEESG) shows a compositional bias: acidic residues. Basic and acidic residues-rich tracts occupy residues 439 to 450 (IEDKNNEEMMEE) and 555 to 568 (EIKK…KDSS). 3 stretches are compositionally biased toward acidic residues: residues 1354–1365 (KDDDDDDDEEGN), 1373–1382 (NVKDEDDGGD), and 1389–1421 (PDDD…DEPE).

In terms of assembly, component of the SIN3S complex, which contains at least sin-3, hda-1, athp-1 and mrg-1. Interacts with ztf-11; the interaction is weak. Interacts with cfp-1. In terms of tissue distribution, expressed in all ray structural cells including ray 6, 7, 8 and 9 of the male tail. Also expressed in the inner labial neurons, socket cells, the cephalic neurons in the head and the ventral nerve cord.

Its subcellular location is the nucleus. Its function is as follows. Probable transcriptional repressor required for the deposition of dimethylated 'Lys-9' of histone H3 (H3K9me2) on asynapsed chromosome pairs (both autosomes and sex chromosomes) during meiosis, but this does not seem to solely affect the transcriptional status. Plays a role in ray fusion and patterning in the male tail, and this may be through activity of the histone deacetylase complex (HDAC). This chain is Paired amphipathic helix protein sin-3, found in Caenorhabditis elegans.